A 279-amino-acid polypeptide reads, in one-letter code: Tryptophan synthase alpha chain (279 aa).

Residues Glu-50 and Asp-61 each act as proton acceptor in the active site.

It belongs to the TrpA family. As to quaternary structure, tetramer of two alpha and two beta chains.

The catalysed reaction is (1S,2R)-1-C-(indol-3-yl)glycerol 3-phosphate + L-serine = D-glyceraldehyde 3-phosphate + L-tryptophan + H2O. Its pathway is amino-acid biosynthesis; L-tryptophan biosynthesis; L-tryptophan from chorismate: step 5/5. The alpha subunit is responsible for the aldol cleavage of indoleglycerol phosphate to indole and glyceraldehyde 3-phosphate. This chain is Tryptophan synthase alpha chain, found in Brucella melitensis biotype 1 (strain ATCC 23456 / CCUG 17765 / NCTC 10094 / 16M).